The sequence spans 353 residues: DNA polymerase IV (353 aa).

The UmuC domain occupies 6–187; sequence IIHVDCDCFY…LPVSKLHGVG (182 aa). The Mg(2+) site is built by Asp10 and Asp105. Glu106 is a catalytic residue.

It belongs to the DNA polymerase type-Y family. In terms of assembly, monomer. The cofactor is Mg(2+).

The protein localises to the cytoplasm. The enzyme catalyses DNA(n) + a 2'-deoxyribonucleoside 5'-triphosphate = DNA(n+1) + diphosphate. Poorly processive, error-prone DNA polymerase involved in untargeted mutagenesis. Copies undamaged DNA at stalled replication forks, which arise in vivo from mismatched or misaligned primer ends. These misaligned primers can be extended by PolIV. Exhibits no 3'-5' exonuclease (proofreading) activity. May be involved in translesional synthesis, in conjunction with the beta clamp from PolIII. The sequence is that of DNA polymerase IV from Pseudomonas fluorescens (strain Pf0-1).